An 884-amino-acid chain; its full sequence is Chitin synthase E (884 aa).

Disordered stretches follow at residues 1-58 (MGTP…PAVS) and 73-108 (AVFAAPPYQESEAASENTFRARSNGDKASREGSRAG). Polar residues-rich tracts occupy residues 37-48 (QSLLERNNSSHY) and 84-93 (EAASENTFRA). N-linked (GlcNAc...) asparagine glycosylation occurs at N44. The span at 95–105 (SNGDKASREGS) shows a compositional bias: basic and acidic residues. N-linked (GlcNAc...) asparagine glycosylation occurs at N301. 7 helical membrane-spanning segments follow: residues 513–532 (WLNGSFAAGLYAIMHFGRIY), 556–576 (IMTWFSLASYWLTSSVIMDLV), 597–617 (IVNNFVKYGYVWVLTLQFIMA), 635–655 (YFSLVQLYVLILSFYLVVGAF), 681–701 (GGIVLIALVSTYGIYIIASVL), 708–728 (IITSSWAYFLGMTTSINILMV), and 812–832 (VLVCLWVFSNLLVTLLITATG). N840 carries an N-linked (GlcNAc...) asparagine glycan. The helical transmembrane segment at 852–872 (VILWITAGLSLFRFIGSLWFL) threads the bilayer.

This sequence belongs to the chitin synthase family. Class III subfamily.

The protein localises to the cell membrane. It carries out the reaction [(1-&gt;4)-N-acetyl-beta-D-glucosaminyl](n) + UDP-N-acetyl-alpha-D-glucosamine = [(1-&gt;4)-N-acetyl-beta-D-glucosaminyl](n+1) + UDP + H(+). Polymerizes chitin, a structural polymer of the cell wall and septum, by transferring the sugar moiety of UDP-GlcNAc to the non-reducing end of the growing chitin polymer. Plays an important role in septal growth or maintenance. Mediates colony spore formation. ChsE and chsD seem to play a functionally redundant role in lateral cell wall chitin synthesis. Involved in resistance to echinocandins. This chain is Chitin synthase E, found in Aspergillus niger (strain ATCC MYA-4892 / CBS 513.88 / FGSC A1513).